The chain runs to 557 residues: Hydroxylamine reductase (557 aa).

Cysteine 3, cysteine 6, cysteine 19, and cysteine 26 together coordinate [4Fe-4S] cluster. Positions 253, 277, 321, 408, 436, 461, 495, and 497 each coordinate hybrid [4Fe-2O-2S] cluster. A Cysteine persulfide modification is found at cysteine 408.

The protein belongs to the HCP family. It depends on [4Fe-4S] cluster as a cofactor. Hybrid [4Fe-2O-2S] cluster serves as cofactor.

The protein resides in the cytoplasm. It catalyses the reaction A + NH4(+) + H2O = hydroxylamine + AH2 + H(+). Catalyzes the reduction of hydroxylamine to form NH(3) and H(2)O. The polypeptide is Hydroxylamine reductase (Acidiphilium cryptum (strain JF-5)).